The primary structure comprises 99 residues: MEIAVVGKSEFVVGFRLAGIHKTYEVKNDKDLESKIRECLTDRNLGIIVLHSDDLKHISPGLQKVIDESVEPTFIAIGSKEDAGLRDKIKRAIGVDLWK.

It belongs to the V-ATPase F subunit family. Has multiple subunits with at least A(3), B(3), C, D, E, F, H, I and proteolipid K(x).

It is found in the cell membrane. In terms of biological role, component of the A-type ATP synthase that produces ATP from ADP in the presence of a proton gradient across the membrane. This chain is A-type ATP synthase subunit F, found in Methanocella arvoryzae (strain DSM 22066 / NBRC 105507 / MRE50).